The sequence spans 1106 residues: Zinc finger protein GLI1 (1106 aa).

An SNAG domain region spans residues 1 to 20 (MFNSMTPPPISSYGEPCCLR). Positions 120–124 (SYGHL) are interaction with SUFU. C2H2-type zinc fingers lie at residues 235–260 (TDCR…NSEH), 268–295 (FVCH…MRRH), 301–325 (HKCT…LRSH), 331–356 (YMCE…NRTH), and 362–387 (YVCK…KTVH). The interval 283–291 (KAQYMLVVH) is interaction with DNA. Interaction with DNA stretches follow at residues 345–350 (ASDRAK) and 375–381 (DPSSLRK). Disordered stretches follow at residues 375-485 (DPSS…DEGP), 516-580 (GLKL…SLPG), 732-792 (YGGP…LYPG), 817-889 (EQGC…PTHS), and 914-942 (GRED…SRAK). The segment covering 413-428 (EPKREREGGPIREESR) has biased composition (basic and acidic residues). Residues 442–463 (PGAQSSCSSDHSPAGSAANTDS) are compositionally biased toward polar residues. N6-acetyllysine is present on Lys-518. Composition is skewed to low complexity over residues 544–560 (SSSS…RRSS) and 737–753 (GAAA…SLPL). A compositionally biased stretch (pro residues) spans 754–766 (GPGPPTNYGPNPC). A compositionally biased stretch (polar residues) spans 768-779 (QQASYPDPTQET). Lys-1003 is covalently cross-linked (Glycyl lysine isopeptide (Lys-Gly) (interchain with G-Cter in SUMO2)). The disordered stretch occupies residues 1054–1087 (DEPQGLSPPPSHDQRGSSGHTPPPSGPPNMAVGN).

This sequence belongs to the GLI C2H2-type zinc-finger protein family. In terms of assembly, interacts with KIF7. Interacts with STK36. Interacts with ZIC1; the interaction enhances transcription activation. Interacts with SUFU; this inhibits transcriptional activation by GLI1. Phosphorylated in vitro by ULK3. In terms of processing, acetylation at Lys-518 down-regulates transcriptional activity. Deacetylated by HDAC1. Post-translationally, ubiquitinated by the CRL2(FEM1B) complex, suppressing GLI1 transcriptional activator activity. In terms of tissue distribution, detected in testis (at protein level). Testis, myometrium and fallopian tube. Also expressed in the brain with highest expression in the cerebellum, optic nerve and olfactory tract. Isoform 1 is detected in brain, spleen, pancreas, liver, kidney and placenta; isoform 2 is not detectable in these tissues.

It localises to the cytoplasm. The protein resides in the nucleus. Acts as a transcriptional activator. Binds to the DNA consensus sequence 5'-GACCACCCA-3'. Regulates the transcription of specific genes during normal development. Plays a role in craniofacial development and digital development, as well as development of the central nervous system and gastrointestinal tract. Mediates SHH signaling. Plays a role in cell proliferation and differentiation via its role in SHH signaling. Functionally, acts as a transcriptional activator, but activates a different set of genes than isoform 1. Activates expression of CD24, unlike isoform 1. Mediates SHH signaling. Promotes cancer cell migration. The protein is Zinc finger protein GLI1 (GLI1) of Homo sapiens (Human).